We begin with the raw amino-acid sequence, 1058 residues long: Kinesin-like protein KIN-5D (1058 aa).

Positions 1–43 (MDSIQQRRGGIVSLSPAQTPRSSDKSARESRSSESNSTNRNDK) are disordered. Positions 22–32 (SSDKSARESRS) are enriched in basic and acidic residues. The region spanning 48 to 390 (NVQVILRCRP…LDYAHRAKNI (343 aa)) is the Kinesin motor domain. 134-141 (GQTGTGKT) serves as a coordination point for ATP. Positions 438–517 (QEEAEKKAMA…QANATIKEKE (80 aa)) form a coiled coil.

It belongs to the TRAFAC class myosin-kinesin ATPase superfamily. Kinesin family. KIN-5/BimC subfamily.

It localises to the cytoplasm. Its subcellular location is the cytoskeleton. It is found in the spindle. Functionally, responsible for microtubule translocation. May be important for the organization of phragmoplast-specific arrays of microtubules. Plays an essential role in stabilizing the mitotic spindle. Required during mitotic cytokinesis. The sequence is that of Kinesin-like protein KIN-5D from Arabidopsis thaliana (Mouse-ear cress).